We begin with the raw amino-acid sequence, 693 residues long: DNA-directed RNA polymerase subunit beta' (693 aa).

Zn(2+)-binding residues include Cys-76, Cys-78, Cys-94, and Cys-97. Mg(2+) contacts are provided by Asp-496, Asp-498, and Asp-500.

It belongs to the RNA polymerase beta' chain family. RpoC1 subfamily. In plastids the minimal PEP RNA polymerase catalytic core is composed of four subunits: alpha, beta, beta', and beta''. When a (nuclear-encoded) sigma factor is associated with the core the holoenzyme is formed, which can initiate transcription. The cofactor is Mg(2+). Zn(2+) is required as a cofactor.

The protein resides in the plastid. It localises to the chloroplast. It catalyses the reaction RNA(n) + a ribonucleoside 5'-triphosphate = RNA(n+1) + diphosphate. DNA-dependent RNA polymerase catalyzes the transcription of DNA into RNA using the four ribonucleoside triphosphates as substrates. The polypeptide is DNA-directed RNA polymerase subunit beta' (Nuphar advena (Common spatterdock)).